Consider the following 291-residue polypeptide: Exosome complex exonuclease RRP42 (291 aa).

Ala-2 is subject to N-acetylalanine. Lys-116 bears the N6-acetyllysine mark.

The protein belongs to the RNase PH family. In terms of assembly, component of the RNA exosome core complex (Exo-9), composed of EXOSC1, EXOSC2, EXOSC3, EXOSC4, EXOSC5, EXOSC6, EXOSC7, EXOSC8 and EXOSC9; within the complex interacts with EXOSC2 and EXOSC4. The catalytically inactive RNA exosome core complex (Exo-9) associates with the catalytic subunit EXOSC10/RRP6. Exo-9 may associate with DIS3 to form the nucleolar exosome complex, or DIS3L to form the cytoplasmic exosome complex. Exo-9 is formed by a hexameric base ring consisting of the heterodimers EXOSC4-EXOSC9, EXOSC5-EXOSC8 and EXOSC6-EXOSC7, and a cap ring consisting of EXOSC1, EXOSC2 and EXOSC3. The RNA exosome complex associates with cofactors C1D/RRP47, MPHOSPH6/MPP6 and MTREX/MTR4. Interacts with ZC3HAV1. Interacts with DIS3; the interaction is direct.

It is found in the nucleus. It localises to the nucleolus. Its subcellular location is the cytoplasm. Functionally, non-catalytic component of the RNA exosome complex which has 3'-&gt;5' exoribonuclease activity and participates in a multitude of cellular RNA processing and degradation events. In the nucleus, the RNA exosome complex is involved in proper maturation of stable RNA species such as rRNA, snRNA and snoRNA, in the elimination of RNA processing by-products and non-coding 'pervasive' transcripts, such as antisense RNA species and promoter-upstream transcripts (PROMPTs), and of mRNAs with processing defects, thereby limiting or excluding their export to the cytoplasm. The RNA exosome may be involved in Ig class switch recombination (CSR) and/or Ig variable region somatic hypermutation (SHM) by targeting AICDA deamination activity to transcribed dsDNA substrates. In the cytoplasm, the RNA exosome complex is involved in general mRNA turnover and specifically degrades inherently unstable mRNAs containing AU-rich elements (AREs) within their 3' untranslated regions, and in RNA surveillance pathways, preventing translation of aberrant mRNAs. It seems to be involved in degradation of histone mRNA. The catalytic inactive RNA exosome core complex of 9 subunits (Exo-9) is proposed to play a pivotal role in the binding and presentation of RNA for ribonucleolysis, and to serve as a scaffold for the association with catalytic subunits and accessory proteins or complexes. In Mus musculus (Mouse), this protein is Exosome complex exonuclease RRP42 (Exosc7).